The following is a 454-amino-acid chain: MSDNDTIVAQATPPGRGGVGILRISGLKAREVAETVLGKLPKPRYADYLPFKDADGSVLDQGIALWFPGPNSFTGEDVLELQGHGGPVILDLLLKRILTIPGLRIARPGEFSERAFLNDKLDLAQAEAIADLIDASSEQAARSALNSLQGAFSARVNHLVEALTHLRIYVEAAIDFPDEEIDFLSDGKIEAQLNDVIADLDAVRAEARQGSLLREGMKVVIAGRPNAGKSSLLNALAGREAAIVTDIAGTTRDVLREHIHIDGMPLHIIDTAGLREASDEVERIGIERAWQEIEQADRVLFMVDGTTTDAVDPAEIWPEFIARLPAKLPITVVRNKADITGETLGMSEVNGHALIRLSARTGEGVDVLRNHLKQSMGFDTNMEGGFLARRRHLQALEQAAEHLQQGKAQLLGAWAGELLAEELRLAQQNLSEITGEFTSDDLLGRIFSSFCIGK.

(6S)-5-formyl-5,6,7,8-tetrahydrofolate-binding residues include Arg-23, Glu-80, and Lys-120. Residues 216–377 (GMKVVIAGRP…LRNHLKQSMG (162 aa)) enclose the TrmE-type G domain. Asn-226 is a K(+) binding site. GTP is bound by residues 226–231 (NAGKSS), 245–251 (TDIAGTT), 270–273 (DTAG), 335–338 (NKAD), and 358–360 (SAR). Residue Ser-230 participates in Mg(2+) binding. Residues Thr-245, Ile-247, and Thr-250 each coordinate K(+). Thr-251 is a binding site for Mg(2+). Lys-454 serves as a coordination point for (6S)-5-formyl-5,6,7,8-tetrahydrofolate.

Belongs to the TRAFAC class TrmE-Era-EngA-EngB-Septin-like GTPase superfamily. TrmE GTPase family. In terms of assembly, homodimer. Heterotetramer of two MnmE and two MnmG subunits. Requires K(+) as cofactor.

It localises to the cytoplasm. Exhibits a very high intrinsic GTPase hydrolysis rate. Involved in the addition of a carboxymethylaminomethyl (cmnm) group at the wobble position (U34) of certain tRNAs, forming tRNA-cmnm(5)s(2)U34. This is tRNA modification GTPase MnmE from Escherichia coli (strain SMS-3-5 / SECEC).